The following is a 78-amino-acid chain: Conotoxin Bu2 (78 aa).

A signal peptide spans 1–19 (MKLTCVLIIAVLFLTAITA). The propeptide occupies 20 to 41 (DDSRDKQVYRAVGLIDKMRRIR). 3 disulfide bridges follow: Cys46/Cys59, Cys53/Cys64, and Cys58/Cys73.

The protein belongs to the conotoxin O1 superfamily. Expressed by the venom duct.

It localises to the secreted. This is Conotoxin Bu2 from Conus bullatus (Bubble cone).